Reading from the N-terminus, the 345-residue chain is NADPH dehydrogenase (345 aa).

23–26 (SPMC) contacts FMN. Residue tyrosine 28 participates in substrate binding. 2 residues coordinate FMN: alanine 60 and glutamine 102. 164–167 (HGAH) lines the substrate pocket. Residues arginine 215 and 307-308 (GR) contribute to the FMN site.

This sequence belongs to the NADH:flavin oxidoreductase/NADH oxidase family. NamA subfamily. In terms of assembly, homotetramer. FMN is required as a cofactor.

The enzyme catalyses A + NADPH + H(+) = AH2 + NADP(+). In terms of biological role, catalyzes the reduction of the double bond of an array of alpha,beta-unsaturated aldehydes and ketones. It also reduces the nitro group of nitroester and nitroaromatic compounds. It could have a role in detoxification processes. In Bacillus cereus (strain ATCC 10987 / NRS 248), this protein is NADPH dehydrogenase.